Reading from the N-terminus, the 46-residue chain is Short transmembrane mitochondrial protein 1 (46 aa).

The chain crosses the membrane as a helical span at residues 7–23 (GFTLGNVVGMYLAQNYE).

This sequence belongs to the STMP1 family. Widely expressed. Expressed more abundantly in brain compared with other tissues such as heart, muscle and liver.

The protein localises to the mitochondrion inner membrane. It localises to the mitochondrion outer membrane. It is found in the mitochondrion intermembrane space. Microprotein involved in mitochondrial respiratory chain complex III (ubiquinol-cytochrome c oxidoreductase) and complex IV (mitochondrial cytochrome c oxidase complex) assembly. Required for the formation of mitochondrial supercomplexes (SCs). Also required for the activation of the NLRP3 inflammasome. The sequence is that of Short transmembrane mitochondrial protein 1 from Danio rerio (Zebrafish).